A 69-amino-acid chain; its full sequence is Ferredoxin-1 (69 aa).

[3Fe-4S] cluster-binding residues include cysteine 12, cysteine 18, and cysteine 57.

The cofactor is [3Fe-4S] cluster.

In terms of biological role, electron transport protein for the cytochrome P-450-SU1 system. The protein is Ferredoxin-1 (suaB) of Streptomyces griseolus.